The sequence spans 160 residues: Cytochrome c-type biogenesis protein CcmE (160 aa).

Topologically, residues 1 to 8 (MNPRRKQR) are cytoplasmic. Residues 9 to 29 (LTWVAILVIGVSVATGLMLYA) traverse the membrane as a helical; Signal-anchor for type II membrane protein segment. Residues 30–160 (LSQSIDLFYT…PNTVEKGEGQ (131 aa)) are Periplasmic-facing. Heme is bound by residues H130 and Y134.

It belongs to the CcmE/CycJ family.

Its subcellular location is the cell inner membrane. Its function is as follows. Heme chaperone required for the biogenesis of c-type cytochromes. Transiently binds heme delivered by CcmC and transfers the heme to apo-cytochromes in a process facilitated by CcmF and CcmH. This is Cytochrome c-type biogenesis protein CcmE from Idiomarina loihiensis (strain ATCC BAA-735 / DSM 15497 / L2-TR).